A 98-amino-acid polypeptide reads, in one-letter code: Putative protein adenylyltransferase MJ0126 (98 aa).

Positions 31 to 45 match the GSX(10)DXD motif motif; the sequence is GSYARNEQTETSDID. Mg(2+)-binding residues include Asp-43, Asp-45, and Asp-75.

It belongs to the MntA antitoxin family. In terms of assembly, probably forms a complex with cognate toxin MJ0125. Requires Mg(2+) as cofactor.

The catalysed reaction is L-tyrosyl-[protein] + ATP = O-(5'-adenylyl)-L-tyrosyl-[protein] + diphosphate. It catalyses the reaction O-(5'-adenylyl)-L-tyrosyl-[protein] + ATP = O-[5'-(adenylyl-(5'-&gt;3')-adenylyl)]-L-tyrosyl-[protein] + diphosphate. Probable antitoxin component of a putative type VII toxin-antitoxin (TA) system. Neutralizes cognate toxic MJ0125 by di-AMPylation. The protein is Putative protein adenylyltransferase MJ0126 of Methanocaldococcus jannaschii (strain ATCC 43067 / DSM 2661 / JAL-1 / JCM 10045 / NBRC 100440) (Methanococcus jannaschii).